Here is a 562-residue protein sequence, read N- to C-terminus: Potassium-transporting ATPase potassium-binding subunit (562 aa).

The next 12 helical transmembrane spans lie at 6-26 (FLLIASFMVVLFVLSRPLGGF), 63-83 (ALAILCFNLLGIVLLFVLLMA), 132-152 (GLTVQNFLSAATGIAVAFALI), 175-195 (LYVLLPIALIIALIFVSQGVL), 253-273 (FVQMLAIFLIPCALCFAFGQV), 283-303 (LIWAMSLIFIVAVVVVMYAEL), 327-347 (FGILATSLYAVVTTAASCGAV), 356-376 (ALGGMIPLWLMQIGEVVFGGV), 379-399 (GLYGMLLFVLLTVFIAGLMIG), 416-436 (MTALAILVTPTIVLLGTALAL), 483-503 (LLLAAAMFIGRFGVILPVLAI), and 526-546 (LFIGLLIGTVLLVGALTFIPA).

The protein belongs to the KdpA family. As to quaternary structure, the system is composed of three essential subunits: KdpA, KdpB and KdpC.

It is found in the cell inner membrane. Its function is as follows. Part of the high-affinity ATP-driven potassium transport (or Kdp) system, which catalyzes the hydrolysis of ATP coupled with the electrogenic transport of potassium into the cytoplasm. This subunit binds the periplasmic potassium ions and delivers the ions to the membrane domain of KdpB through an intramembrane tunnel. In Yersinia pseudotuberculosis serotype O:1b (strain IP 31758), this protein is Potassium-transporting ATPase potassium-binding subunit.